Here is a 202-residue protein sequence, read N- to C-terminus: Ribosome biogenesis regulatory protein homolog (202 aa).

Positions 82-103 are disordered; it reads TLPPPTTPLPREKPVPQPKPET.

Belongs to the RRS1 family. Component of a hexameric 5S RNP precursor complex, composed of 5S RNA, RRS1, RPF2, RPL5, RPL11 and SYO1; this complex acts as a precursor for ribosome assembly.

It localises to the nucleus. Functionally, involved in ribosomal large subunit assembly. This is Ribosome biogenesis regulatory protein homolog from Chaetomium thermophilum (strain DSM 1495 / CBS 144.50 / IMI 039719) (Thermochaetoides thermophila).